Here is a 54-residue protein sequence, read N- to C-terminus: Large ribosomal subunit protein bL33A (54 aa).

Belongs to the bacterial ribosomal protein bL33 family.

This Mesoplasma florum (strain ATCC 33453 / NBRC 100688 / NCTC 11704 / L1) (Acholeplasma florum) protein is Large ribosomal subunit protein bL33A.